Here is a 97-residue protein sequence, read N- to C-terminus: Co-chaperonin GroES (97 aa).

This sequence belongs to the GroES chaperonin family. As to quaternary structure, heptamer of 7 subunits arranged in a ring. Interacts with the chaperonin GroEL.

The protein localises to the cytoplasm. Its function is as follows. Together with the chaperonin GroEL, plays an essential role in assisting protein folding. The GroEL-GroES system forms a nano-cage that allows encapsulation of the non-native substrate proteins and provides a physical environment optimized to promote and accelerate protein folding. GroES binds to the apical surface of the GroEL ring, thereby capping the opening of the GroEL channel. The chain is Co-chaperonin GroES from Yersinia enterocolitica.